The sequence spans 327 residues: DNA-directed RNA polymerase subunit alpha (327 aa).

Residues 1–233 (MVREKVKVST…NLFIPFLHVE (233 aa)) are alpha N-terminal domain (alpha-NTD). The tract at residues 267 to 327 (LAFQYIFIDQ…KKILDILEKK (61 aa)) is alpha C-terminal domain (alpha-CTD).

Belongs to the RNA polymerase alpha chain family. In terms of assembly, in plastids the minimal PEP RNA polymerase catalytic core is composed of four subunits: alpha, beta, beta', and beta''. When a (nuclear-encoded) sigma factor is associated with the core the holoenzyme is formed, which can initiate transcription.

The protein localises to the plastid. The protein resides in the chloroplast. It carries out the reaction RNA(n) + a ribonucleoside 5'-triphosphate = RNA(n+1) + diphosphate. In terms of biological role, DNA-dependent RNA polymerase catalyzes the transcription of DNA into RNA using the four ribonucleoside triphosphates as substrates. This Lepidium virginicum (Virginia pepperweed) protein is DNA-directed RNA polymerase subunit alpha.